The sequence spans 64 residues: Prokaryotic ubiquitin-like protein Pup (64 aa).

The interval 1–37 (MAQEQTKRGGGGGDDEDVTGTTAAGQERREKLAQDTD) is disordered. The ARC ATPase binding stretch occupies residues 21-58 (TTAAGQERREKLAQDTDDLLDEIDDVLEENAEDFVRAY). A coiled-coil region spans residues 25–52 (GQERREKLAQDTDDLLDEIDDVLEENAE). Glutamine 64 is subject to Deamidated glutamine. Glutamine 64 participates in a covalent cross-link: Isoglutamyl lysine isopeptide (Gln-Lys) (interchain with K-? in acceptor proteins).

Belongs to the prokaryotic ubiquitin-like protein family. In terms of assembly, strongly interacts with the proteasome-associated ATPase ARC through a hydrophobic interface; the interacting region of Pup lies in its C-terminal half. There is one Pup binding site per ARC hexamer ring. In terms of processing, is modified by deamidation of its C-terminal glutamine to glutamate by the deamidase Dop, a prerequisite to the subsequent pupylation process.

It participates in protein degradation; proteasomal Pup-dependent pathway. Protein modifier that is covalently attached to lysine residues of substrate proteins, thereby targeting them for proteasomal degradation. The tagging system is termed pupylation. The sequence is that of Prokaryotic ubiquitin-like protein Pup from Mycobacterium marinum (strain ATCC BAA-535 / M).